The sequence spans 354 residues: Uroporphyrinogen decarboxylase (354 aa).

Substrate is bound by residues 27–31 (RQAGR), D77, Y154, S209, and H327.

This sequence belongs to the uroporphyrinogen decarboxylase family. In terms of assembly, homodimer.

Its subcellular location is the cytoplasm. The catalysed reaction is uroporphyrinogen III + 4 H(+) = coproporphyrinogen III + 4 CO2. Its pathway is porphyrin-containing compound metabolism; protoporphyrin-IX biosynthesis; coproporphyrinogen-III from 5-aminolevulinate: step 4/4. Catalyzes the decarboxylation of four acetate groups of uroporphyrinogen-III to yield coproporphyrinogen-III. This is Uroporphyrinogen decarboxylase from Pseudomonas savastanoi pv. phaseolicola (strain 1448A / Race 6) (Pseudomonas syringae pv. phaseolicola (strain 1448A / Race 6)).